The following is a 354-amino-acid chain: Probable L-ascorbate-6-phosphate lactonase UlaG (354 aa).

This sequence belongs to the UlaG family. It depends on a divalent metal cation as a cofactor.

The protein resides in the cytoplasm. The catalysed reaction is L-ascorbate 6-phosphate + H2O = 3-dehydro-L-gulonate 6-phosphate. The protein operates within cofactor degradation; L-ascorbate degradation; D-xylulose 5-phosphate from L-ascorbate: step 1/4. In terms of biological role, probably catalyzes the hydrolysis of L-ascorbate-6-P into 3-keto-L-gulonate-6-P. Is essential for L-ascorbate utilization under anaerobic conditions. The protein is Probable L-ascorbate-6-phosphate lactonase UlaG of Shigella flexneri.